A 286-amino-acid polypeptide reads, in one-letter code: MTQNHDPYSDAKELAGLTLGKATDYQAEYDASLLQGVPRSLNRNAINLTAESLPFHGADIWTAYELSWLNAKGKPMVAIADIQLSHASQNLIESKSFKLYLNSFNQTKFDNLDAVQKTLVKDLSECAQGDVTVKIIEPKSFGIQRVVELPGTCIDDLDIEVSDYDFNPEYLENSTDEKQIVAETLNSNLLKSNCLITSQPDWGSVMIRYQGPKIDREKLLRYLISFRQHNEFHEQCVERIFVDLKHYCHCAKLTVYARYTRRGGLDINPYRSDFEHPGESHRLARQ.

Position 92 to 94 (92 to 94 (IES)) interacts with substrate. 94-95 (SK) contacts NADPH. C194 functions as the Thioimide intermediate in the catalytic mechanism. D201 acts as the Proton donor in catalysis. 233 to 234 (HE) lines the substrate pocket. An NADPH-binding site is contributed by 262 to 263 (RG).

The protein belongs to the GTP cyclohydrolase I family. QueF type 2 subfamily. In terms of assembly, homodimer.

The protein localises to the cytoplasm. It carries out the reaction 7-aminomethyl-7-carbaguanine + 2 NADP(+) = 7-cyano-7-deazaguanine + 2 NADPH + 3 H(+). The protein operates within tRNA modification; tRNA-queuosine biosynthesis. Functionally, catalyzes the NADPH-dependent reduction of 7-cyano-7-deazaguanine (preQ0) to 7-aminomethyl-7-deazaguanine (preQ1). The sequence is that of NADPH-dependent 7-cyano-7-deazaguanine reductase from Shewanella oneidensis (strain ATCC 700550 / JCM 31522 / CIP 106686 / LMG 19005 / NCIMB 14063 / MR-1).